We begin with the raw amino-acid sequence, 285 residues long: Glutamate racemase (285 aa).

Substrate contacts are provided by residues 28–29 and 60–61; these read DS and YG. Cys92 acts as the Proton donor/acceptor in catalysis. 93–94 provides a ligand contact to substrate; it reads NT. Catalysis depends on Cys204, which acts as the Proton donor/acceptor. 205-206 lines the substrate pocket; the sequence is TH.

This sequence belongs to the aspartate/glutamate racemases family.

The enzyme catalyses L-glutamate = D-glutamate. The protein operates within cell wall biogenesis; peptidoglycan biosynthesis. In terms of biological role, provides the (R)-glutamate required for cell wall biosynthesis. The chain is Glutamate racemase from Escherichia coli O9:H4 (strain HS).